Reading from the N-terminus, the 137-residue chain is Large-conductance mechanosensitive channel (137 aa).

Helical transmembrane passes span 16-36 and 83-103; these read VIDL…VDSI and GNFI…FLMI.

The protein belongs to the MscL family. Homopentamer.

The protein localises to the cell inner membrane. In terms of biological role, channel that opens in response to stretch forces in the membrane lipid bilayer. May participate in the regulation of osmotic pressure changes within the cell. The chain is Large-conductance mechanosensitive channel from Methylibium petroleiphilum (strain ATCC BAA-1232 / LMG 22953 / PM1).